A 507-amino-acid polypeptide reads, in one-letter code: Maturase K (507 aa).

It belongs to the intron maturase 2 family. MatK subfamily.

Its subcellular location is the plastid. The protein localises to the chloroplast. Usually encoded in the trnK tRNA gene intron. Probably assists in splicing its own and other chloroplast group II introns. The protein is Maturase K of Humulus lupulus (European hop).